The primary structure comprises 503 residues: Dentin matrix acidic phosphoprotein 1 (503 aa).

Residues 1–16 (MKTVILLVFLWGLSCA) form the signal peptide. Residues 23–35 (HNTESESSEERTG) show a composition bias toward basic and acidic residues. Residues 23–503 (HNTESESSEE…QDDNDCQDGY (481 aa)) are disordered. Polar residues predominate over residues 54–63 (QASPEGQANS). Residues 98-119 (KEDDEDDSGDDTFGDEDNDLGP) are compositionally biased toward acidic residues. A compositionally biased stretch (low complexity) spans 138-150 (DTTQSSEDSTSQE). Over residues 158–175 (SDSKDHDSEDEADSRPEA) the composition is skewed to basic and acidic residues. Residues 203–215 (SEFDDEGMQSDDP) are compositionally biased toward acidic residues. Composition is skewed to basic and acidic residues over residues 233–243 (RSEESKGDHEP), 267–286 (HVSE…RETQ), and 293–303 (TASKEESRSES). Residues 332 to 348 (EPSQESSSESQEGVTSE) are compositionally biased toward low complexity. Positions 350-352 (RGD) match the Cell attachment site motif. A glycan (N-linked (GlcNAc...) asparagine) is linked at N356. Residues 362–373 (DQEDSESSEEDS) show a composition bias toward acidic residues. N394 carries N-linked (GlcNAc...) asparagine glycosylation. The span at 407 to 418 (AQDGDSSSQEGL) shows a compositional bias: polar residues. Positions 419-435 (QSQSASTESRSQESQSE) are enriched in low complexity. The N-linked (GlcNAc...) asparagine glycan is linked to N457. Over residues 467–492 (EDIRPKNMEADSRKLIVDAYHNKPIG) the composition is skewed to basic and acidic residues. Positions 493-503 (DQDDNDCQDGY) are enriched in acidic residues.

In terms of assembly, interacts with importin alpha. Post-translationally, phosphorylated in the cytosol and extracellular matrix and unphosphorylated in the nucleus. Phosphorylation is necessary for nucleocytoplasmic transport and may be catalyzed by a nuclear isoform of CK2 and can be augmented by calcium. Phosphorylated (in vitro) by FAM20C in the extracellular medium at sites within the S-x-E/pS motif. In terms of tissue distribution, expressed in tooth particularly in odontoblast, ameloblast and cementoblast. Also expressed in bone particularly in osteoblast.

It is found in the nucleus. The protein resides in the cytoplasm. The protein localises to the secreted. Its subcellular location is the extracellular space. It localises to the extracellular matrix. Its function is as follows. May have a dual function during osteoblast differentiation. In the nucleus of undifferentiated osteoblasts, unphosphorylated form acts as a transcriptional component for activation of osteoblast-specific genes like osteocalcin. During the osteoblast to osteocyte transition phase it is phosphorylated and exported into the extracellular matrix, where it regulates nucleation of hydroxyapatite. This chain is Dentin matrix acidic phosphoprotein 1, found in Mus musculus (Mouse).